The chain runs to 1058 residues: Carbamoyl phosphate synthase large chain (1058 aa).

Residues 1 to 401 (MPKRTDIQKI…SLLKACRSLE (401 aa)) form a carboxyphosphate synthetic domain region. Residues R129, R169, G175, G176, R208, I210, E215, G241, I242, H243, Q284, and E298 each contribute to the ATP site. Positions 133-327 (KQLMEELEQP…IAKLAAKIAV (195 aa)) constitute an ATP-grasp 1 domain. Residues Q284, E298, and N300 each coordinate Mg(2+). 3 residues coordinate Mn(2+): Q284, E298, and N300. An oligomerization domain region spans residues 402 to 546 (IGVHHNEIPE…YSTYGWENES (145 aa)). Residues 547–929 (IRSDKESVLV…ALYKAFEASY (383 aa)) form a carbamoyl phosphate synthetic domain region. An ATP-grasp 2 domain is found at 671-861 (EQALKELDIP…MAQVATKLIL (191 aa)). Residues R707, S746, I748, E752, G777, V778, H779, S780, Q820, and E832 each contribute to the ATP site. Mg(2+) contacts are provided by Q820, E832, and N834. Mn(2+) contacts are provided by Q820, E832, and N834. One can recognise an MGS-like domain in the interval 930–1058 (LHLPTFGNVV…ESRSFVTEAI (129 aa)). The tract at residues 930-1058 (LHLPTFGNVV…ESRSFVTEAI (129 aa)) is allosteric domain.

This sequence belongs to the CarB family. Composed of two chains; the small (or glutamine) chain promotes the hydrolysis of glutamine to ammonia, which is used by the large (or ammonia) chain to synthesize carbamoyl phosphate. Tetramer of heterodimers (alpha,beta)4. Requires Mg(2+) as cofactor. Mn(2+) is required as a cofactor.

The enzyme catalyses hydrogencarbonate + L-glutamine + 2 ATP + H2O = carbamoyl phosphate + L-glutamate + 2 ADP + phosphate + 2 H(+). It catalyses the reaction hydrogencarbonate + NH4(+) + 2 ATP = carbamoyl phosphate + 2 ADP + phosphate + 2 H(+). It participates in amino-acid biosynthesis; L-arginine biosynthesis; carbamoyl phosphate from bicarbonate: step 1/1. The protein operates within pyrimidine metabolism; UMP biosynthesis via de novo pathway; (S)-dihydroorotate from bicarbonate: step 1/3. In terms of biological role, large subunit of the glutamine-dependent carbamoyl phosphate synthetase (CPSase). CPSase catalyzes the formation of carbamoyl phosphate from the ammonia moiety of glutamine, carbonate, and phosphate donated by ATP, constituting the first step of 2 biosynthetic pathways, one leading to arginine and/or urea and the other to pyrimidine nucleotides. The large subunit (synthetase) binds the substrates ammonia (free or transferred from glutamine from the small subunit), hydrogencarbonate and ATP and carries out an ATP-coupled ligase reaction, activating hydrogencarbonate by forming carboxy phosphate which reacts with ammonia to form carbamoyl phosphate. The protein is Carbamoyl phosphate synthase large chain of Streptococcus pneumoniae serotype 19F (strain G54).